A 561-amino-acid polypeptide reads, in one-letter code: Centromere protein T (561 aa).

The interval methionine 1–arginine 78 is disordered. Over residues arginine 18–threonine 27 the composition is skewed to basic and acidic residues. A compositionally biased stretch (polar residues) spans threonine 45 to threonine 57. Serine 47 bears the Phosphoserine mark. Residue threonine 85 is modified to Phosphothreonine. The flexible stalk domain stretch occupies residues isoleucine 93 to proline 421. Disordered stretches follow at residues alanine 114–leucine 134, histidine 256–alanine 293, and serine 314–lysine 457. Over residues arginine 276–proline 289 the composition is skewed to polar residues. Basic and acidic residues predominate over residues glycine 329–glycine 341. Phosphoserine is present on residues serine 343, serine 345, serine 356, serine 373, serine 385, serine 386, and serine 397. Over residues threonine 365 to threonine 376 the composition is skewed to polar residues. The span at arginine 439 to arginine 450 shows a compositional bias: low complexity.

It belongs to the CENP-T/CNN1 family. Component of the CENPA-CAD complex, composed of CENPI, CENPK, CENPL, CENPO, CENPP, CENPQ, CENPR and CENPS. The CENPA-CAD complex is probably recruited on centromeres by the CENPA-NAC complex, at least composed of CENPA, CENPC, CENPH, CENPM, CENPN, CENPT and CENPU. Identified in a centromeric complex containing histones H2A, H2B, H3 and H4, and at least CENPA, CENPB, CENPC, CENPT, CENPN, HJURP, SUPT16H, SSRP1 and RSF1. Interacts (via N-terminus) with the NDC80 complex. Heterodimer with CENPW; this dimer coassembles with CENPS-CENPX heterodimers at centromeres to form the tetrameric CENP-T-W-S-X complex. In terms of processing, dynamically phosphorylated during the cell cycle. Phosphorylated during G2 phase, metaphase and anaphase, but not during telophase or G1 phase.

Its subcellular location is the nucleus. The protein resides in the chromosome. It is found in the centromere. The protein localises to the kinetochore. Its function is as follows. Component of the CENPA-NAC (nucleosome-associated) complex, a complex that plays a central role in assembly of kinetochore proteins, mitotic progression and chromosome segregation. The CENPA-NAC complex recruits the CENPA-CAD (nucleosome distal) complex and may be involved in incorporation of newly synthesized CENPA into centromeres. Part of a nucleosome-associated complex that binds specifically to histone H3-containing nucleosomes at the centromere, as opposed to nucleosomes containing CENPA. Component of the heterotetrameric CENP-T-W-S-X complex that binds and supercoils DNA, and plays an important role in kinetochore assembly. CENPT has a fundamental role in kinetochore assembly and function. It is one of the inner kinetochore proteins, with most further proteins binding downstream. Required for normal chromosome organization and normal progress through mitosis. This Macaca fascicularis (Crab-eating macaque) protein is Centromere protein T (CENPT).